A 693-amino-acid chain; its full sequence is Elongation factor G (693 aa).

Positions asparagine 8 to threonine 283 constitute a tr-type G domain. GTP is bound by residues alanine 17–threonine 24, aspartate 81–histidine 85, and asparagine 135–aspartate 138.

This sequence belongs to the TRAFAC class translation factor GTPase superfamily. Classic translation factor GTPase family. EF-G/EF-2 subfamily.

It localises to the cytoplasm. Its function is as follows. Catalyzes the GTP-dependent ribosomal translocation step during translation elongation. During this step, the ribosome changes from the pre-translocational (PRE) to the post-translocational (POST) state as the newly formed A-site-bound peptidyl-tRNA and P-site-bound deacylated tRNA move to the P and E sites, respectively. Catalyzes the coordinated movement of the two tRNA molecules, the mRNA and conformational changes in the ribosome. In Wolinella succinogenes (strain ATCC 29543 / DSM 1740 / CCUG 13145 / JCM 31913 / LMG 7466 / NCTC 11488 / FDC 602W) (Vibrio succinogenes), this protein is Elongation factor G.